Reading from the N-terminus, the 123-residue chain is Small ribosomal subunit protein uS12 (123 aa).

This sequence belongs to the universal ribosomal protein uS12 family. In terms of assembly, part of the 30S ribosomal subunit. Contacts proteins S8 and S17. May interact with IF1 in the 30S initiation complex.

In terms of biological role, with S4 and S5 plays an important role in translational accuracy. Functionally, interacts with and stabilizes bases of the 16S rRNA that are involved in tRNA selection in the A site and with the mRNA backbone. Located at the interface of the 30S and 50S subunits, it traverses the body of the 30S subunit contacting proteins on the other side and probably holding the rRNA structure together. The combined cluster of proteins S8, S12 and S17 appears to hold together the shoulder and platform of the 30S subunit. The chain is Small ribosomal subunit protein uS12 from Corynebacterium diphtheriae (strain ATCC 700971 / NCTC 13129 / Biotype gravis).